We begin with the raw amino-acid sequence, 551 residues long: Glucans biosynthesis protein D (551 aa).

The segment at residues 1 to 32 (MNRRRFLQGSLAMAALSGTTGLSTLFSRAAFA) is a signal peptide (tat-type signal).

This sequence belongs to the OpgD/OpgG family. Predicted to be exported by the Tat system. The position of the signal peptide cleavage has not been experimentally proven.

Its subcellular location is the periplasm. The protein operates within glycan metabolism; osmoregulated periplasmic glucan (OPG) biosynthesis. Functionally, probably involved in the control of the structural glucose backbone of osmoregulated periplasmic glucans (OPGs). This chain is Glucans biosynthesis protein D, found in Enterobacter sp. (strain 638).